The sequence spans 54 residues: Large ribosomal subunit protein uL15 (54 aa).

Over residues 1-30 (MPSRLRXTRKLRGHVSHGHGRIGKHRKHPG) the composition is skewed to basic residues. A disordered region spans residues 1–42 (MPSRLRXTRKLRGHVSHGHGRIGKHRKHPGGRGNAGGMHHHR). His39 is modified ((3S)-3-hydroxyhistidine). Lys47 carries the post-translational modification N6-acetyllysine.

This sequence belongs to the universal ribosomal protein uL15 family. In terms of assembly, component of the large ribosomal subunit. Hydroxylated on His-39 by MINA.

It is found in the cytoplasm. Functionally, component of the large ribosomal subunit. The ribosome is a large ribonucleoprotein complex responsible for the synthesis of proteins in the cell. This is Large ribosomal subunit protein uL15 (RPL27A) from Sus scrofa (Pig).